A 490-amino-acid chain; its full sequence is GTPase Der (490 aa).

In terms of domain architecture, EngA-type G 1 spans 1–165 (MRIAILGRPN…RIRQVAEIPL (165 aa)). GTP-binding positions include 7–14 (GRPNVGKS), 54–58 (DTGGV), and 117–120 (NKAD). The tract at residues 165–184 (LPSAEEQENTQEEEFSSKES) is disordered. Positions 169–178 (EEQENTQEEE) are enriched in acidic residues. Residues 227–400 (LKVALIGHPN…AVDDVYTIAT (174 aa)) form the EngA-type G 2 domain. Residues 233–240 (GHPNVGKS), 280–284 (DTAGL), and 345–348 (NKWD) contribute to the GTP site. Positions 401 to 485 (TKLSTSLVNK…PFDLEYKAKP (85 aa)) constitute a KH-like domain.

This sequence belongs to the TRAFAC class TrmE-Era-EngA-EngB-Septin-like GTPase superfamily. EngA (Der) GTPase family. As to quaternary structure, associates with the 50S ribosomal subunit.

In terms of biological role, GTPase that plays an essential role in the late steps of ribosome biogenesis. The chain is GTPase Der from Chlamydia muridarum (strain MoPn / Nigg).